Reading from the N-terminus, the 347-residue chain is Aurora kinase A- and ninein-interacting protein (347 aa).

The tract at residues 182-347 (QREAKRKREG…DSEGNRVIRH (166 aa)) is interaction with AURKA. Residues 273-347 (RDSWSQLFTE…DSEGNRVIRH (75 aa)) form an interaction with RBBP8/CtIP region. At Ser-284 the chain carries Phosphoserine. Over residues 301-322 (VTNARNQGSGQFPDSPQAQGQD) the composition is skewed to polar residues. The disordered stretch occupies residues 301 to 325 (VTNARNQGSGQFPDSPQAQGQDGPT).

It belongs to the AUNIP family. As to quaternary structure, interacts (via C-terminus) with AURKA (via C-terminus). Interacts (via N-terminus) with NIN; this interaction blocks NIN phosphorylation by both AURKA and GSK3B. Identified in a complex with NIN and AURKA. Interacts with RBBP8/CtIP.

The protein resides in the nucleus. It localises to the chromosome. It is found in the cytoplasm. The protein localises to the cytoskeleton. Its subcellular location is the microtubule organizing center. The protein resides in the centrosome. It localises to the spindle pole. Functionally, DNA-binding protein that accumulates at DNA double-strand breaks (DSBs) following DNA damage and promotes DNA resection and homologous recombination. Serves as a sensor of DNA damage: binds DNA with a strong preference for DNA substrates that mimic structures generated at stalled replication forks, and anchors RBBP8/CtIP to DSB sites to promote DNA end resection and ensuing homologous recombination repair. Inhibits non-homologous end joining (NHEJ). Required for the dynamic movement of AURKA at the centrosomes and spindle apparatus during the cell cycle. This Rattus norvegicus (Rat) protein is Aurora kinase A- and ninein-interacting protein.